We begin with the raw amino-acid sequence, 396 residues long: Chalcone synthase (396 aa).

Cys-169 is a catalytic residue.

Belongs to the thiolase-like superfamily. Chalcone/stilbene synthases family.

It carries out the reaction (E)-4-coumaroyl-CoA + 3 malonyl-CoA + 3 H(+) = 2',4,4',6'-tetrahydroxychalcone + 3 CO2 + 4 CoA. It functions in the pathway secondary metabolite biosynthesis; flavonoid biosynthesis. The primary product of this enzyme is 4,2',4',6'-tetrahydroxychalcone (also termed naringenin-chalcone or chalcone) which can under specific conditions spontaneously isomerize into naringenin. This is Chalcone synthase (CHS) from Pinus sylvestris (Scotch pine).